Here is a 251-residue protein sequence, read N- to C-terminus: YlmG homolog protein 2, chloroplastic (251 aa).

A chloroplast-targeting transit peptide spans 1–51 (MEASANEPAMKSLKSNPSGPIPNFFVSLSSAFTQTPLVRSNKPNLLLLPPV). Transmembrane regions (helical) follow at residues 119 to 139 (GFAAVLPGDSVAGLVVANGLI) and 183 to 203 (FIPPLGGLDLSPILAFLVLNA). The span at 232–243 (VRRRRLSSHKDH) shows a compositional bias: basic residues. A disordered region spans residues 232 to 251 (VRRRRLSSHKDHRPSSASMT).

This sequence belongs to the YggT family.

It localises to the plastid. Its subcellular location is the chloroplast thylakoid membrane. Functionally, not required for the biogenesis and accumulation of native cytochrome b6 in the thylakoid membrane. Not functionally involved in the pathway for covalent binding of the c-type heme to cytochrome b6. This is YlmG homolog protein 2, chloroplastic from Arabidopsis thaliana (Mouse-ear cress).